The primary structure comprises 219 residues: uncharacterized protein (219 aa).

Residues valine 70–glutamine 102 form a disordered region. Residues glycine 73–glutamate 101 are compositionally biased toward basic and acidic residues. A coiled-coil region spans residues threonine 96–glutamate 120. The next 3 membrane-spanning stretches (helical) occupy residues glycine 126–leucine 146, isoleucine 153–leucine 173, and threonine 192–phenylalanine 212.

The protein localises to the membrane. This is an uncharacterized protein from Acanthamoeba polyphaga mimivirus (APMV).